Here is a 37-residue protein sequence, read N- to C-terminus: Cytochrome b6-f complex subunit 5 (37 aa).

Residues 5–25 traverse the membrane as a helical segment; the sequence is LLSGIVLGMIPITLAGLFVTA.

It belongs to the PetG family. As to quaternary structure, the 4 large subunits of the cytochrome b6-f complex are cytochrome b6, subunit IV (17 kDa polypeptide, PetD), cytochrome f and the Rieske protein, while the 4 small subunits are PetG, PetL, PetM and PetN. The complex functions as a dimer.

Its subcellular location is the plastid. It is found in the chloroplast thylakoid membrane. Functionally, component of the cytochrome b6-f complex, which mediates electron transfer between photosystem II (PSII) and photosystem I (PSI), cyclic electron flow around PSI, and state transitions. PetG is required for either the stability or assembly of the cytochrome b6-f complex. The polypeptide is Cytochrome b6-f complex subunit 5 (Mesostigma viride (Green alga)).